A 406-amino-acid chain; its full sequence is Succinylornithine transaminase (406 aa).

At lysine 252 the chain carries N6-(pyridoxal phosphate)lysine.

The protein belongs to the class-III pyridoxal-phosphate-dependent aminotransferase family. AstC subfamily. Pyridoxal 5'-phosphate is required as a cofactor.

It carries out the reaction N(2)-succinyl-L-ornithine + 2-oxoglutarate = N-succinyl-L-glutamate 5-semialdehyde + L-glutamate. It functions in the pathway amino-acid degradation; L-arginine degradation via AST pathway; L-glutamate and succinate from L-arginine: step 3/5. In terms of biological role, catalyzes the transamination of N(2)-succinylornithine and alpha-ketoglutarate into N(2)-succinylglutamate semialdehyde and glutamate. Can also act as an acetylornithine aminotransferase. This chain is Succinylornithine transaminase, found in Escherichia coli O127:H6 (strain E2348/69 / EPEC).